A 149-amino-acid polypeptide reads, in one-letter code: UPF0208 membrane protein VSAL_I2111 (149 aa).

2 helical membrane-spanning segments follow: residues 41-61 (FAVK…MVFN) and 69-89 (SIII…WLGN).

It belongs to the UPF0208 family.

It is found in the cell inner membrane. This chain is UPF0208 membrane protein VSAL_I2111, found in Aliivibrio salmonicida (strain LFI1238) (Vibrio salmonicida (strain LFI1238)).